The following is a 123-amino-acid chain: Small ribosomal subunit protein uS12 (123 aa).

A 3-methylthioaspartic acid modification is found at Asp89.

This sequence belongs to the universal ribosomal protein uS12 family. Part of the 30S ribosomal subunit. Contacts proteins S8 and S17. May interact with IF1 in the 30S initiation complex.

With S4 and S5 plays an important role in translational accuracy. In terms of biological role, interacts with and stabilizes bases of the 16S rRNA that are involved in tRNA selection in the A site and with the mRNA backbone. Located at the interface of the 30S and 50S subunits, it traverses the body of the 30S subunit contacting proteins on the other side and probably holding the rRNA structure together. The combined cluster of proteins S8, S12 and S17 appears to hold together the shoulder and platform of the 30S subunit. This is Small ribosomal subunit protein uS12 from Desulfovibrio desulfuricans (strain ATCC 27774 / DSM 6949 / MB).